Reading from the N-terminus, the 592-residue chain is 2-succinyl-5-enolpyruvyl-6-hydroxy-3-cyclohexene-1-carboxylate synthase (592 aa).

This sequence belongs to the TPP enzyme family. MenD subfamily. In terms of assembly, homodimer. It depends on Mg(2+) as a cofactor. Mn(2+) is required as a cofactor. The cofactor is thiamine diphosphate.

It catalyses the reaction isochorismate + 2-oxoglutarate + H(+) = 5-enolpyruvoyl-6-hydroxy-2-succinyl-cyclohex-3-ene-1-carboxylate + CO2. It functions in the pathway quinol/quinone metabolism; 1,4-dihydroxy-2-naphthoate biosynthesis; 1,4-dihydroxy-2-naphthoate from chorismate: step 2/7. It participates in quinol/quinone metabolism; menaquinone biosynthesis. Catalyzes the thiamine diphosphate-dependent decarboxylation of 2-oxoglutarate and the subsequent addition of the resulting succinic semialdehyde-thiamine pyrophosphate anion to isochorismate to yield 2-succinyl-5-enolpyruvyl-6-hydroxy-3-cyclohexene-1-carboxylate (SEPHCHC). In Leifsonia xyli subsp. xyli (strain CTCB07), this protein is 2-succinyl-5-enolpyruvyl-6-hydroxy-3-cyclohexene-1-carboxylate synthase.